We begin with the raw amino-acid sequence, 173 residues long: Shikimate kinase 2 (173 aa).

12–17 (GCGKTT) serves as a coordination point for ATP. 2 residues coordinate Mg(2+): Thr-16 and Asp-32. Residues Asp-34, Arg-58, and Gly-79 each contribute to the substrate site. An LID domain region spans residues 112-126 (EENPQDNQRPTLTGR). Arg-120 contacts ATP. Arg-139 contacts substrate. Gln-155 contributes to the ATP binding site.

Belongs to the shikimate kinase family. AroL subfamily. In terms of assembly, monomer. Mg(2+) serves as cofactor.

The protein resides in the cytoplasm. It carries out the reaction shikimate + ATP = 3-phosphoshikimate + ADP + H(+). It functions in the pathway metabolic intermediate biosynthesis; chorismate biosynthesis; chorismate from D-erythrose 4-phosphate and phosphoenolpyruvate: step 5/7. Its function is as follows. Catalyzes the specific phosphorylation of the 3-hydroxyl group of shikimic acid using ATP as a cosubstrate. In Pectobacterium carotovorum subsp. carotovorum (strain PC1), this protein is Shikimate kinase 2.